Reading from the N-terminus, the 101-residue chain is Large ribosomal subunit protein uL23 (101 aa).

This sequence belongs to the universal ribosomal protein uL23 family. As to quaternary structure, part of the 50S ribosomal subunit. Contacts protein L29, and trigger factor when it is bound to the ribosome.

In terms of biological role, one of the early assembly proteins it binds 23S rRNA. One of the proteins that surrounds the polypeptide exit tunnel on the outside of the ribosome. Forms the main docking site for trigger factor binding to the ribosome. The polypeptide is Large ribosomal subunit protein uL23 (Corynebacterium efficiens (strain DSM 44549 / YS-314 / AJ 12310 / JCM 11189 / NBRC 100395)).